Reading from the N-terminus, the 269-residue chain is MKSGFVVRSTISSWESAERFCRQFSLPLLDMQAKHNQEVFQLIFDHQNVHLLDCRAKKPLTLMVDFVTGSRDHRRKFGGGAGQAVAKAVGVKGNRTLHVLDATAGLGGDAFVLACLGSRVTMIERSPVAYALLADGLKRGLLQAEEAGDDELLAILQRMTLVPNDGSDWMRDQLASSDSEQPDVVYLDPMFPEKSKKALAKKEMQIFQEVVGGDEDADKLFEPAFALAKYRVVVKRPKIAPLLNGQEPSVQLVGKSSRFDVYAKKKLPE.

S-adenosyl-L-methionine-binding positions include 124–125 (ER) and Asp188.

It belongs to the methyltransferase superfamily. RsmJ family.

Its subcellular location is the cytoplasm. It carries out the reaction guanosine(1516) in 16S rRNA + S-adenosyl-L-methionine = N(2)-methylguanosine(1516) in 16S rRNA + S-adenosyl-L-homocysteine + H(+). Its function is as follows. Specifically methylates the guanosine in position 1516 of 16S rRNA. The protein is Ribosomal RNA small subunit methyltransferase J of Saccharophagus degradans (strain 2-40 / ATCC 43961 / DSM 17024).